A 311-amino-acid polypeptide reads, in one-letter code: MQSLEPWHGRCRLQFQTNNGSTKHQGGCTAPFKLLRADVGDHGRCELPLLHTAGGLVGGDELSIELDLGPDSRSLITSVAAQKVYGSVGRSRLHPDGAWTQQSVTCRLEDTSDLEWLPQELVLYADALFQQTLTVSLPDNASFLSAEIVRLGRTAAGEQLNRGRWRSCLEIQRDGAHQPRWELVDRLELGDTSLNDPHGLGGAPVFGSLVWAAPMPLTGEQITLLLAGARHDRDGLEGTMRCSSLDQGLIARYAGHSSRDARFWFSRIWARTRALRGLSTPRIPRVWPLQEQPLTGQPFTANASPTAATTH.

The protein belongs to the UreD family. UreD, UreF and UreG form a complex that acts as a GTP-hydrolysis-dependent molecular chaperone, activating the urease apoprotein by helping to assemble the nickel containing metallocenter of UreC. The UreE protein probably delivers the nickel.

It localises to the cytoplasm. Required for maturation of urease via the functional incorporation of the urease nickel metallocenter. In Parasynechococcus marenigrum (strain WH8102), this protein is Urease accessory protein UreD.